A 164-amino-acid chain; its full sequence is CB1 cannabinoid receptor-interacting protein 1 (164 aa).

Belongs to the CNRIP family. Interacts with the cannabinoid receptor CNR1 (via C-terminus). Does not interact with cannabinoid receptor CNR2.

Suppresses cannabinoid receptor CNR1-mediated tonic inhibition of voltage-gated calcium channels. In Bos taurus (Bovine), this protein is CB1 cannabinoid receptor-interacting protein 1 (CNRIP1).